The chain runs to 137 residues: Large ribosomal subunit protein uL16 (137 aa).

Belongs to the universal ribosomal protein uL16 family. Part of the 50S ribosomal subunit.

Its function is as follows. Binds 23S rRNA and is also seen to make contacts with the A and possibly P site tRNAs. This chain is Large ribosomal subunit protein uL16, found in Methylococcus capsulatus (strain ATCC 33009 / NCIMB 11132 / Bath).